Here is a 517-residue protein sequence, read N- to C-terminus: Ribosome assembly protein 4 (517 aa).

The interval 1 to 25 is disordered; the sequence is MATLAPPPSKRQRREEIQRTQTQQD. The interval 34–128 is ubiquitin-like (UBL) domain; that stretch reads LGSFKANFID…TITLSAEPQA (95 aa). 8 WD repeats span residues 144–184, 187–226, 230–277, 278–316, 351–397, 402–441, 444–483, and 486–517; these read GHGQ…PKFT, GHTG…QVNQ, GHAK…HVLS, GHKG…LVHN, EERR…SKPV, GHQN…FIKN, GHVA…LAMD, and GHED…TWRN.

Belongs to the NLE1/RSA4 family. Associates with the pre-60S ribosomal particle. Interacts (via WD repeats) with uL18. Interacts (via UBL domain) with MDN1 (via VWFA/MIDAS domain). Interacts (via WD repeats) with NSA2.

The protein localises to the nucleus. Its subcellular location is the nucleolus. Functionally, involved in ribosome biogenesis. Required for processing and efficient intra-nuclear transport of pre-60S ribosomal subunits. Interacts with the AAA-ATPase Midasin, which is essential for the ATP-dependent dissociation of a group of nonribosomal factors from the pre-60S particle. The polypeptide is Ribosome assembly protein 4 (Chaetomium thermophilum (strain DSM 1495 / CBS 144.50 / IMI 039719) (Thermochaetoides thermophila)).